A 210-amino-acid polypeptide reads, in one-letter code: Chorismate pyruvate-lyase (210 aa).

The protein belongs to the chorismate pyruvate-lyase type 2 family.

The catalysed reaction is chorismate = 4-hydroxybenzoate + pyruvate. Its function is as follows. Removes the pyruvyl group from chorismate to provide 4-hydroxybenzoate (4HB). Involved in the synthesis of glycosylated p-hydroxybenzoic acid methyl esters (p-HBADs) and phenolic glycolipids (PGL) that play important roles in the pathogenesis of mycobacterial infections. The polypeptide is Chorismate pyruvate-lyase (Mycobacterium leprae (strain TN)).